The sequence spans 265 residues: 2-Cys peroxiredoxin BAS1, chloroplastic (265 aa).

The transit peptide at 1 to 65 directs the protein to the chloroplast; it reads MACVASSTTL…SSTSRRSFAV (65 aa). One can recognise a Thioredoxin domain in the interval 73 to 232; that stretch reads PLVGNKAPDF…TMRTLQALQY (160 aa). The Cysteine sulfenic acid (-SOH) intermediate role is filled by Cys119.

It belongs to the peroxiredoxin family. AhpC/Prx1 subfamily. In terms of assembly, homodimer; disulfide-linked, upon oxidation.

It localises to the plastid. It is found in the chloroplast. The catalysed reaction is a hydroperoxide + [thioredoxin]-dithiol = an alcohol + [thioredoxin]-disulfide + H2O. In terms of biological role, thiol-specific peroxidase that catalyzes the reduction of hydrogen peroxide and organic hydroperoxides to water and alcohols, respectively. Plays a role in cell protection against oxidative stress by detoxifying peroxides. May be an antioxidant enzyme particularly in the developing shoot and photosynthesizing leaf. This is 2-Cys peroxiredoxin BAS1, chloroplastic (BAS1) from Spinacia oleracea (Spinach).